We begin with the raw amino-acid sequence, 475 residues long: tRNA-dihydrouridine(16/17) synthase [NAD(P)(+)]-like (475 aa).

FMN is bound by residues 23–25 (PMV) and Q79. The active-site Proton donor is the C108. FMN is bound by residues K147, H175, 208-210 (NGN), and 232-233 (AE). The interval 343–388 (GPREGSKENSGGRSKRALEEEEGSMEGLSKNKLKKQLRNPHKTFDP) is disordered. The segment covering 373 to 383 (NKLKKQLRNPH) has biased composition (basic residues).

It belongs to the Dus family. Dus1 subfamily. Requires FMN as cofactor.

Its subcellular location is the cytoplasm. The protein localises to the nucleus. It carries out the reaction 5,6-dihydrouridine(16) in tRNA + NADP(+) = uridine(16) in tRNA + NADPH + H(+). It catalyses the reaction 5,6-dihydrouridine(16) in tRNA + NAD(+) = uridine(16) in tRNA + NADH + H(+). The catalysed reaction is 5,6-dihydrouridine(17) in tRNA + NAD(+) = uridine(17) in tRNA + NADH + H(+). The enzyme catalyses 5,6-dihydrouridine(17) in tRNA + NADP(+) = uridine(17) in tRNA + NADPH + H(+). Catalyzes the synthesis of dihydrouridine, a modified base found in the D-loop of most tRNAs. Specifically modifies U16 and U17 in cytoplasmic tRNAs. Affects the level of some mature tRNA and thereby the total cellular translation. This is tRNA-dihydrouridine(16/17) synthase [NAD(P)(+)]-like (Dus1l) from Mus musculus (Mouse).